Reading from the N-terminus, the 301-residue chain is 5'-3' exonuclease (301 aa).

The 5'-3' exonuclease domain occupies 182 to 264 (GYADLALLRG…RVAADVPLPD (83 aa)).

Its function is as follows. 5'-3' exonuclease acting preferentially on double-stranded DNA. The sequence is that of 5'-3' exonuclease from Streptomyces coelicolor (strain ATCC BAA-471 / A3(2) / M145).